Reading from the N-terminus, the 61-residue chain is Large ribosomal subunit protein uL30 (61 aa).

The protein belongs to the universal ribosomal protein uL30 family. Part of the 50S ribosomal subunit.

In Treponema pallidum subsp. pallidum (strain SS14), this protein is Large ribosomal subunit protein uL30.